The following is a 192-amino-acid chain: Ribose 1,5-bisphosphate phosphokinase PhnN (192 aa).

ATP is bound at residue 15-22; that stretch reads GPSGAGKD.

Belongs to the ribose 1,5-bisphosphokinase family.

The enzyme catalyses alpha-D-ribose 1,5-bisphosphate + ATP = 5-phospho-alpha-D-ribose 1-diphosphate + ADP. The protein operates within metabolic intermediate biosynthesis; 5-phospho-alpha-D-ribose 1-diphosphate biosynthesis; 5-phospho-alpha-D-ribose 1-diphosphate from D-ribose 5-phosphate (route II): step 3/3. In terms of biological role, catalyzes the phosphorylation of ribose 1,5-bisphosphate to 5-phospho-D-ribosyl alpha-1-diphosphate (PRPP). This is Ribose 1,5-bisphosphate phosphokinase PhnN from Brucella melitensis biotype 2 (strain ATCC 23457).